The following is a 257-amino-acid chain: NAD-capped RNA hydrolase NudC (257 aa).

A substrate-binding site is contributed by Arg-69. Residues Cys-98 and Cys-101 each contribute to the Zn(2+) site. Glu-111 lines the substrate pocket. Residues Cys-116 and Cys-119 each contribute to the Zn(2+) site. Tyr-124 is a substrate binding site. One can recognise a Nudix hydrolase domain in the interval 125–248; it reads PQIAPCIIVA…TVARRLIEDT (124 aa). Positions 158, 174, and 178 each coordinate a divalent metal cation. The short motif at 159–180 is the Nudix box element; the sequence is GFVEVGETLEQAVAREVMEESG. Residue 192-199 coordinates substrate; the sequence is QPWPFPQS. Position 219 (Glu-219) interacts with a divalent metal cation. Ala-241 lines the substrate pocket.

This sequence belongs to the Nudix hydrolase family. NudC subfamily. As to quaternary structure, homodimer. The cofactor is Mg(2+). Requires Mn(2+) as cofactor. It depends on Zn(2+) as a cofactor.

The catalysed reaction is a 5'-end NAD(+)-phospho-ribonucleoside in mRNA + H2O = a 5'-end phospho-adenosine-phospho-ribonucleoside in mRNA + beta-nicotinamide D-ribonucleotide + 2 H(+). It catalyses the reaction NAD(+) + H2O = beta-nicotinamide D-ribonucleotide + AMP + 2 H(+). The enzyme catalyses NADH + H2O = reduced beta-nicotinamide D-ribonucleotide + AMP + 2 H(+). Functionally, mRNA decapping enzyme that specifically removes the nicotinamide adenine dinucleotide (NAD) cap from a subset of mRNAs by hydrolyzing the diphosphate linkage to produce nicotinamide mononucleotide (NMN) and 5' monophosphate mRNA. The NAD-cap is present at the 5'-end of some mRNAs and stabilizes RNA against 5'-processing. Has preference for mRNAs with a 5'-end purine. Catalyzes the hydrolysis of a broad range of dinucleotide pyrophosphates. The polypeptide is NAD-capped RNA hydrolase NudC (Salmonella choleraesuis (strain SC-B67)).